The chain runs to 390 residues: Dual-specificity RNA methyltransferase RlmN (390 aa).

Glu-110 serves as the catalytic Proton acceptor. One can recognise a Radical SAM core domain in the interval 116–355 (EADRATLCVS…VIIRKTRGDD (240 aa)). Cysteines 123 and 360 form a disulfide. [4Fe-4S] cluster-binding residues include Cys-130, Cys-134, and Cys-137. S-adenosyl-L-methionine contacts are provided by residues 184–185 (GE), Ser-216, 238–240 (SLH), and Asn-317. Catalysis depends on Cys-360, which acts as the S-methylcysteine intermediate.

Belongs to the radical SAM superfamily. RlmN family. [4Fe-4S] cluster is required as a cofactor.

It is found in the cytoplasm. The enzyme catalyses adenosine(2503) in 23S rRNA + 2 reduced [2Fe-2S]-[ferredoxin] + 2 S-adenosyl-L-methionine = 2-methyladenosine(2503) in 23S rRNA + 5'-deoxyadenosine + L-methionine + 2 oxidized [2Fe-2S]-[ferredoxin] + S-adenosyl-L-homocysteine. It catalyses the reaction adenosine(37) in tRNA + 2 reduced [2Fe-2S]-[ferredoxin] + 2 S-adenosyl-L-methionine = 2-methyladenosine(37) in tRNA + 5'-deoxyadenosine + L-methionine + 2 oxidized [2Fe-2S]-[ferredoxin] + S-adenosyl-L-homocysteine. Functionally, specifically methylates position 2 of adenine 2503 in 23S rRNA and position 2 of adenine 37 in tRNAs. m2A2503 modification seems to play a crucial role in the proofreading step occurring at the peptidyl transferase center and thus would serve to optimize ribosomal fidelity. In Haemophilus influenzae (strain 86-028NP), this protein is Dual-specificity RNA methyltransferase RlmN.